Consider the following 792-residue polypeptide: Type 2 topoisomerase subunit B (792 aa).

Residues 423–537 (CEIFLVEGDS…EGYVYIAEPP (115 aa)) enclose the Toprim domain. Mg(2+) contacts are provided by E429, D502, and D504.

The protein belongs to the type II topoisomerase GyrB family. In terms of assembly, heterotetramer, composed of two GyrA and two GyrB chains. In the heterotetramer, 'GyrA' contains the active site tyrosine that forms a transient covalent intermediate with DNA, while 'GyrB' binds cofactors and catalyzes ATP hydrolysis. Mg(2+) is required as a cofactor. Mn(2+) serves as cofactor. It depends on Ca(2+) as a cofactor.

The protein resides in the cytoplasm. The enzyme catalyses ATP-dependent breakage, passage and rejoining of double-stranded DNA.. In terms of biological role, a type II topoisomerase. Despite its similarity to DNA gyrase, this enzyme is not able to supercoil DNA, and instead acts like topoisomerase IV. Relaxes both positively and negatively supercoiled DNA in an ATP-dependent fashion, decatenates interlocked circles. If this subunit is reconstituted with GyrA from E.coli the hybrid enzyme supercoils relaxed plasmid DNA; if paired with E.coli ParC supercoiling is not restored. This the first bacteria shown to not contain DNA gyrase, although it has 2 copies of a reverse gyrase that introduces positive supercoils. Type II topoisomerases break and join 2 DNA strands simultaneously in an ATP-dependent manner. This Aquifex aeolicus (strain VF5) protein is Type 2 topoisomerase subunit B.